We begin with the raw amino-acid sequence, 228 residues long: Thymidylate kinase (228 aa).

Residues 1-10 (MSDSAVQRSS) show a composition bias toward polar residues. Residues 1–23 (MSDSAVQRSSGRGRFITFEGGEG) are disordered. 20–27 (GGEGTGKS) is a binding site for ATP.

This sequence belongs to the thymidylate kinase family.

The enzyme catalyses dTMP + ATP = dTDP + ADP. Functionally, phosphorylation of dTMP to form dTDP in both de novo and salvage pathways of dTTP synthesis. The sequence is that of Thymidylate kinase from Bradyrhizobium diazoefficiens (strain JCM 10833 / BCRC 13528 / IAM 13628 / NBRC 14792 / USDA 110).